Consider the following 145-residue polypeptide: Probable 4-amino-4-deoxy-L-arabinose-phosphoundecaprenol flippase subunit ArnF (145 aa).

Residues 1 to 3 lie on the Cytoplasmic side of the membrane; the sequence is MAH. Residues 4–24 traverse the membrane as a helical segment; sequence LTLSIRGLLLALMSVLLISVA. The Periplasmic segment spans residues 25–61; the sequence is QLSMKWGMGTLNQLWSDLVMLWQGEDYSSLFSQALAP. A helical membrane pass occupies residues 62–82; sequence VMAVGAGLFCYALSMACWVMA. Over 83–89 the chain is Cytoplasmic; the sequence is LKRLPLS. The helical transmembrane segment at 90 to 110 threads the bilayer; the sequence is IAYPLLSLSYVLVYLGAVYLP. The Periplasmic segment spans residues 111–114; the sequence is WLNE. A helical transmembrane segment spans residues 115–135; that stretch reads PLSWVKGTGIFLILLGLIFVL. At 136-145 the chain is on the cytoplasmic side; it reads PKKNQTSDKS.

It belongs to the ArnF family. Heterodimer of ArnE and ArnF.

The protein localises to the cell inner membrane. It functions in the pathway bacterial outer membrane biogenesis; lipopolysaccharide biosynthesis. In terms of biological role, translocates 4-amino-4-deoxy-L-arabinose-phosphoundecaprenol (alpha-L-Ara4N-phosphoundecaprenol) from the cytoplasmic to the periplasmic side of the inner membrane. This chain is Probable 4-amino-4-deoxy-L-arabinose-phosphoundecaprenol flippase subunit ArnF, found in Shewanella sediminis (strain HAW-EB3).